A 176-amino-acid polypeptide reads, in one-letter code: uncharacterized protein (176 aa).

Residues 1–20 form the signal peptide; sequence MIKKISIILITLFIIQLTKS. Residues 26 to 46 are disordered; sequence NNNNNNNNNNNNNNNNNNNNN. The N-linked (GlcNAc...) asparagine glycan is linked to Asn120.

Belongs to the Dictyostelium gerABC family.

The protein resides in the secreted. This is an uncharacterized protein from Dictyostelium discoideum (Social amoeba).